We begin with the raw amino-acid sequence, 457 residues long: Bifunctional protein GlmU (457 aa).

Residues 1–232 (MNNLAAVILA…PAEVMGINDR (232 aa)) form a pyrophosphorylase region. UDP-N-acetyl-alpha-D-glucosamine-binding positions include 9 to 12 (LAAG), Lys23, Gln75, and 80 to 81 (GT). Residue Asp105 participates in Mg(2+) binding. Residues Gly142, Glu157, Asn172, and Asn230 each coordinate UDP-N-acetyl-alpha-D-glucosamine. Asn230 lines the Mg(2+) pocket. Positions 233 to 253 (AQLAEAGQLLRGRINKALMLD) are linker. Residues 254–457 (GTTLIDPQTT…NKEGWKLKKK (204 aa)) form an N-acetyltransferase region. UDP-N-acetyl-alpha-D-glucosamine is bound by residues Arg336 and Lys354. The Proton acceptor role is filled by His366. The UDP-N-acetyl-alpha-D-glucosamine site is built by Tyr369 and Asn380. Acetyl-CoA is bound by residues 389 to 390 (NY), Ser408, Ala426, and Arg443.

In the N-terminal section; belongs to the N-acetylglucosamine-1-phosphate uridyltransferase family. This sequence in the C-terminal section; belongs to the transferase hexapeptide repeat family. In terms of assembly, homotrimer. The cofactor is Mg(2+).

It localises to the cytoplasm. The enzyme catalyses alpha-D-glucosamine 1-phosphate + acetyl-CoA = N-acetyl-alpha-D-glucosamine 1-phosphate + CoA + H(+). The catalysed reaction is N-acetyl-alpha-D-glucosamine 1-phosphate + UTP + H(+) = UDP-N-acetyl-alpha-D-glucosamine + diphosphate. The protein operates within nucleotide-sugar biosynthesis; UDP-N-acetyl-alpha-D-glucosamine biosynthesis; N-acetyl-alpha-D-glucosamine 1-phosphate from alpha-D-glucosamine 6-phosphate (route II): step 2/2. It participates in nucleotide-sugar biosynthesis; UDP-N-acetyl-alpha-D-glucosamine biosynthesis; UDP-N-acetyl-alpha-D-glucosamine from N-acetyl-alpha-D-glucosamine 1-phosphate: step 1/1. Its pathway is bacterial outer membrane biogenesis; LPS lipid A biosynthesis. Catalyzes the last two sequential reactions in the de novo biosynthetic pathway for UDP-N-acetylglucosamine (UDP-GlcNAc). The C-terminal domain catalyzes the transfer of acetyl group from acetyl coenzyme A to glucosamine-1-phosphate (GlcN-1-P) to produce N-acetylglucosamine-1-phosphate (GlcNAc-1-P), which is converted into UDP-GlcNAc by the transfer of uridine 5-monophosphate (from uridine 5-triphosphate), a reaction catalyzed by the N-terminal domain. In Geotalea uraniireducens (strain Rf4) (Geobacter uraniireducens), this protein is Bifunctional protein GlmU.